The following is an 86-amino-acid chain: Small ribosomal subunit protein bS16 (86 aa).

The protein belongs to the bacterial ribosomal protein bS16 family.

The sequence is that of Small ribosomal subunit protein bS16 from Stenotrophomonas maltophilia (strain K279a).